A 362-amino-acid polypeptide reads, in one-letter code: Probable RNA methyltransferase Tbd_1951 (362 aa).

Glu89 (proton acceptor) is an active-site residue. The region spanning 92-318 (LLPRDGVCVS…AKLRHSAGQD (227 aa)) is the Radical SAM core domain. Cys99 and Cys323 form a disulfide bridge. [4Fe-4S] cluster contacts are provided by Cys106, Cys110, and Cys113. Residues 151-152 (GE), Ser181, 204-206 (SLH), and Asn280 contribute to the S-adenosyl-L-methionine site. Cys323 acts as the S-methylcysteine intermediate in catalysis. The segment at 342 to 362 (LPSAETPAASPKAAASIGFPG) is disordered. A compositionally biased stretch (low complexity) spans 343-362 (PSAETPAASPKAAASIGFPG).

The protein belongs to the radical SAM superfamily. RlmN family. The cofactor is [4Fe-4S] cluster.

It localises to the cytoplasm. This chain is Probable RNA methyltransferase Tbd_1951, found in Thiobacillus denitrificans (strain ATCC 25259 / T1).